The chain runs to 203 residues: Holliday junction branch migration complex subunit RuvA (203 aa).

The segment at 1 to 64 (MIGRLRGIIL…EDAQLLYGFN (64 aa)) is domain I. The segment at 65–142 (NKQERTLFKE…KGLHGDLFTP (78 aa)) is domain II. The interval 143 to 154 (AVDLVLTSPASP) is flexible linker. The interval 155-203 (GSEDAEQEAVAALVALGYKPQEASRMVSKIARPDASSETLIRDALRAAL) is domain III.

The protein belongs to the RuvA family. In terms of assembly, homotetramer. Forms an RuvA(8)-RuvB(12)-Holliday junction (HJ) complex. HJ DNA is sandwiched between 2 RuvA tetramers; dsDNA enters through RuvA and exits via RuvB. An RuvB hexamer assembles on each DNA strand where it exits the tetramer. Each RuvB hexamer is contacted by two RuvA subunits (via domain III) on 2 adjacent RuvB subunits; this complex drives branch migration. In the full resolvosome a probable DNA-RuvA(4)-RuvB(12)-RuvC(2) complex forms which resolves the HJ.

Its subcellular location is the cytoplasm. The RuvA-RuvB-RuvC complex processes Holliday junction (HJ) DNA during genetic recombination and DNA repair, while the RuvA-RuvB complex plays an important role in the rescue of blocked DNA replication forks via replication fork reversal (RFR). RuvA specifically binds to HJ cruciform DNA, conferring on it an open structure. The RuvB hexamer acts as an ATP-dependent pump, pulling dsDNA into and through the RuvAB complex. HJ branch migration allows RuvC to scan DNA until it finds its consensus sequence, where it cleaves and resolves the cruciform DNA. The chain is Holliday junction branch migration complex subunit RuvA from Salmonella schwarzengrund (strain CVM19633).